The chain runs to 251 residues: Sec-independent protein translocase protein TatC (251 aa).

6 consecutive transmembrane segments (helical) span residues 23–43 (AFII…SFLL), 73–93 (SAFT…YLFI), 104–124 (IIAF…IFVF), 159–179 (LVIH…VIIV), 197–217 (IAVV…ILSQ), and 218–238 (FALA…CNFI).

It belongs to the TatC family. In terms of assembly, the Tat system comprises two distinct complexes: a TatABC complex, containing multiple copies of TatA, TatB and TatC subunits, and a separate TatA complex, containing only TatA subunits. Substrates initially bind to the TatABC complex, which probably triggers association of the separate TatA complex to form the active translocon.

The protein localises to the cell inner membrane. Its function is as follows. Part of the twin-arginine translocation (Tat) system that transports large folded proteins containing a characteristic twin-arginine motif in their signal peptide across membranes. Together with TatB, TatC is part of a receptor directly interacting with Tat signal peptides. This chain is Sec-independent protein translocase protein TatC, found in Rickettsia prowazekii (strain Madrid E).